Reading from the N-terminus, the 91-residue chain is MEKDLESHVDDVMSEHGVVGVMCTDDQGLSLIAKGTANPATAGFVQNLAESARKLYPDSEQQPVICLESDACNLLIKSQNKVTIAVHKVPS.

It belongs to the LAMTOR5 family. In terms of assembly, part of the Ragulator complex.

Its subcellular location is the cytoplasm. The protein localises to the lysosome. Regulator of the TOR pathway, a signaling cascade that promotes cell growth in response to growth factors, energy levels, and amino acids. As part of the Ragulator complex, may activate the TOR signaling cascade in response to amino acids. This chain is Ragulator complex protein LAMTOR5 homolog, found in Nematostella vectensis (Starlet sea anemone).